The primary structure comprises 476 residues: UDP-glucose 6-dehydrogenase (476 aa).

Residues 7-12 (GAGYVG), Asp-32, Arg-37, 85-89 (VNTPT), 126-127 (ST), and Glu-161 each bind NAD(+). Residues 157-161 (EFLAE), 216-220 (KLAAN), Arg-256, and 263-269 (QASVGFG) contribute to the substrate site. The active-site Nucleophile is the Cys-272. An NAD(+)-binding site is contributed by 272-275 (CFQK). Residue 334–335 (FK) participates in substrate binding. Arg-342 serves as a coordination point for NAD(+). A substrate-binding site is contributed by Arg-439.

The protein belongs to the UDP-glucose/GDP-mannose dehydrogenase family.

It catalyses the reaction UDP-alpha-D-glucose + 2 NAD(+) + H2O = UDP-alpha-D-glucuronate + 2 NADH + 3 H(+). Its pathway is nucleotide-sugar biosynthesis; UDP-alpha-D-glucuronate biosynthesis; UDP-alpha-D-glucuronate from UDP-alpha-D-glucose: step 1/1. Involved in the biosynthesis of glycosaminoglycans; hyaluronan, chondroitin sulfate and heparan sulfate. Required for wingless signaling in different tissues. This is UDP-glucose 6-dehydrogenase (sgl) from Drosophila melanogaster (Fruit fly).